Reading from the N-terminus, the 742-residue chain is Synaptic vesicle glycoprotein 2A (742 aa).

An interaction with SYT1 region spans residues 1-57 (MEEGFRDRAAFIRGAKDIAKEVKKHAAKKVVKGLDRVQDEYSRRSYSRFEEEDDDDD). At 1 to 169 (MEEGFRDRAA…GHGRFQWTLY (169 aa)) the chain is on the cytoplasmic side. The span at 33-49 (GLDRVQDEYSRRSYSRF) shows a compositional bias: basic and acidic residues. Positions 33–144 (GLDRVQDEYS…GRGEAQRRKE (112 aa)) are disordered. Phosphoserine occurs at positions 80 and 81. Residue T84 is modified to Phosphothreonine. Residues 122-137 (VRGGLSDGEGPPGGRG) are compositionally biased toward gly residues. S127 bears the Phosphoserine mark. A helical membrane pass occupies residues 170 to 190 (FVLGLALMADGVEVFVVGFVL). Residues 191-205 (PSAEKDMCLSDSNKG) lie on the Extracellular side of the membrane. The chain crosses the membrane as a helical span at residues 206–226 (MLGLIVYLGMMVGAFLWGGLA). Topologically, residues 227-233 (DRLGRRQ) are cytoplasmic. A helical membrane pass occupies residues 234–254 (CLLISLSVNSVFAFFSSFVQG). The Extracellular portion of the chain corresponds to 255-262 (YGTFLFCR). Residues 263–283 (LLSGVGIGGSIPIVFSYFSEF) traverse the membrane as a helical segment. The Cytoplasmic portion of the chain corresponds to 284–294 (LAQEKRGEHLS). Residues 295–315 (WLCMFWMIGGVYAAAMAWAII) form a helical membrane-spanning segment. Over 316 to 334 (PHYGWSFQMGSAYQFHSWR) the chain is Extracellular. A helical transmembrane segment spans residues 335-355 (VFVLVCAFPSVFAIGALTTQP). The Cytoplasmic segment spans residues 356–447 (ESPRFFLENG…CFGPEYRRIT (92 aa)). A Phosphoserine modification is found at S393. The chain crosses the membrane as a helical span at residues 448–468 (LMMMGVWFTMSFSYYGLTVWF). Residues 469–598 (PDMIRHLQAV…GTGEGAYMVY (130 aa)) lie on the Extracellular side of the membrane. The residue at position 480 (Y480) is a Phosphotyrosine. N498, N548, and N573 each carry an N-linked (GlcNAc...) asparagine glycan. Residues 599–619 (FVSFLGTLAVLPGNIVSALLM) traverse the membrane as a helical segment. Residues 620–626 (DKIGRLR) are Cytoplasmic-facing. Residues 627 to 647 (MLAGSSVMSCVSCFFLSFGNS) traverse the membrane as a helical segment. The Extracellular portion of the chain corresponds to 648-651 (ESAM). Residues 652–672 (IALLCLFGGVSIASWNALDVL) form a helical membrane-spanning segment. Residues 673 to 690 (TVGLYPSDKRTTAFGFLN) lie on the Cytoplasmic side of the membrane. The chain crosses the membrane as a helical span at residues 691–711 (ALCKLAAVLGISIFTSFVGIT). A topological domain (extracellular) is located at residue K712. Residues 713-733 (AAPIPFASAALALGSSLALKL) traverse the membrane as a helical segment. Over 734-742 (PETRGQVLQ) the chain is Cytoplasmic.

Belongs to the major facilitator superfamily. Interacts with SYT1/synaptotagmin-1 in a calcium-dependent manner. Binds the adapter protein complex AP-2. In terms of processing, phosphorylation by CK1 of the N-terminal cytoplasmic domain regulates interaction with SYT1. Post-translationally, N-glycosylated.

The protein resides in the presynapse. It is found in the cytoplasmic vesicle. It localises to the secretory vesicle. The protein localises to the synaptic vesicle membrane. Its function is as follows. Plays a role in the control of regulated secretion in neural and endocrine cells, enhancing selectively low-frequency neurotransmission. Positively regulates vesicle fusion by maintaining the readily releasable pool of secretory vesicles. The polypeptide is Synaptic vesicle glycoprotein 2A (SV2A) (Macaca fascicularis (Crab-eating macaque)).